Reading from the N-terminus, the 431-residue chain is Protoheme IX farnesyltransferase, mitochondrial (431 aa).

A mitochondrion-targeting transit peptide spans 1–33 (MWRRSVVYRFSSRISVSSSLPNPRLIPWSRELC). A run of 9 helical transmembrane segments spans residues 109–129 (LVVA…AISF), 131–153 (GLCY…NQIF), 174–194 (ISVP…ACLL), 200–220 (MLAA…YTPL), 226–246 (INTW…WAAA), 255–275 (MILP…LAHL), 298–317 (IAAV…FIAY), 322–344 (TSSW…AFSF), and 356–376 (MFHA…LHRV).

It belongs to the ubiA prenyltransferase (TC 3.D.4.8) family.

The protein resides in the mitochondrion inner membrane. It catalyses the reaction heme b + (2E,6E)-farnesyl diphosphate + H2O = Fe(II)-heme o + diphosphate. Functionally, converts protoheme IX and farnesyl diphosphate to heme O. This is Protoheme IX farnesyltransferase, mitochondrial (COX10) from Arabidopsis thaliana (Mouse-ear cress).